A 497-amino-acid polypeptide reads, in one-letter code: MATAASNPYLPGNSLLAAGSIVHSDAAGAGGGGGGGGGGGGGAGGGGGGMQPGSAAVTSGAYRGDPSSVKMVQSDFMQGAMAASNGGHMLSHAHQWVTALPHAAAAAAAAAAAAVEASSPWSGSAVGMAGSPQQPPRPPPPPPQGPDVKGGVGREDLHAGTALHHRGPPHLGPPPPPPHQGHPGGWGAAAAAAAAAAAAAAAAHLPSMAGGQQPPPQSLLYSQPGGFTVNGMLSAPPGPGGGGGGAGGGAQSLVHPGLVRGDTPELAEHHHHHHHHAHPHPPHPHHAQGPPHHGGGGAGPGLNSHDPHSDEDTPTSDDLEQFAKQFKQRRIKLGFTQADVGLALGTLYGNVFSQTTICRFEALQLSFKNMCKLKPLLNKWLEEADSSTGSPTSIDKIAAQGRKRKKRTSIEVSVKGALESHFLKCPKPSAQEITNLADSLQLEKEVVRVWFCNRRQKEKRMTPPGIQQQTPDDVYSQVGTVSADTPPPHHGLQTSVQ.

The segment covering 31 to 51 (GGGGGGGGGGGGAGGGGGGMQ) has biased composition (gly residues). Disordered stretches follow at residues 31 to 62 (GGGGGGGGGGGGAGGGGGGMQPGSAAVTSGAY), 121 to 189 (WSGS…WGAA), 230 to 316 (NGML…TPTS), and 458 to 497 (EKRMTPPGIQQQTPDDVYSQVGTVSADTPPPHHGLQTSVQ). 2 stretches are compositionally biased toward pro residues: residues 133–145 (QQPPRPPPPPPQG) and 170–180 (HLGPPPPPPHQ). Positions 240-250 (GGGGGGAGGGA) are enriched in gly residues. The segment covering 269 to 286 (HHHHHHHHAHPHPPHPHH) has biased composition (basic residues). A POU-specific domain is found at 311-385 (EDTPTSDDLE…LLNKWLEEAD (75 aa)). The segment at residues 403–462 (KRKKRTSIEVSVKGALESHFLKCPKPSAQEITNLADSLQLEKEVVRVWFCNRRQKEKRMT) is a DNA-binding region (homeobox). Residues 465–483 (GIQQQTPDDVYSQVGTVSA) show a composition bias toward polar residues.

This sequence belongs to the POU transcription factor family. Class-3 subfamily. Homodimer. Brain.

The protein localises to the nucleus. Functionally, transcription factor that acts synergistically with SOX11 and SOX4. Plays a role in neuronal development. Is implicated in an enhancer activity at the embryonic met-mesencephalic junction; the enhancer element contains the octamer motif (5'-ATTTGCAT-3'). The polypeptide is POU domain, class 3, transcription factor 3 (Pou3f3) (Rattus norvegicus (Rat)).